We begin with the raw amino-acid sequence, 821 residues long: Centrosomal protein of 95 kDa (821 aa).

3 disordered regions span residues 310-354 (TLCK…FPQK), 390-474 (ATGE…DTHH), and 514-550 (KEAF…SSKA). Composition is skewed to basic and acidic residues over residues 325 to 340 (ESSK…RSEN) and 390 to 410 (ATGE…HSAN). The segment covering 427–441 (RKPRPGFSMHRKAPY) has biased composition (basic residues). Phosphoserine occurs at positions 445, 447, and 449. Coiled coils occupy residues 578 to 627 (LTKM…VKKE) and 695 to 789 (LQIQ…DDDA).

Its subcellular location is the cytoplasm. The protein localises to the cytoskeleton. The protein resides in the microtubule organizing center. It is found in the centrosome. It localises to the spindle pole. The chain is Centrosomal protein of 95 kDa (Cep95) from Rattus norvegicus (Rat).